Here is a 208-residue protein sequence, read N- to C-terminus: UPF0637 protein BCQ_3749 (208 aa).

Belongs to the UPF0637 family.

In Bacillus cereus (strain Q1), this protein is UPF0637 protein BCQ_3749.